Reading from the N-terminus, the 327-residue chain is Urokinase plasminogen activator surface receptor (327 aa).

The first 23 residues, 1–23, serve as a signal peptide directing secretion; it reads MGLPRRLLLLLLLATTCVPASQG. UPAR/Ly6 domains are found at residues 24 to 117, 117 to 212, and 213 to 298; these read LQCM…GRYL, LECA…PPNG, and FQCY…SPTG. 3 cysteine pairs are disulfide-bonded: cysteine 26/cysteine 47, cysteine 29/cysteine 35, and cysteine 40/cysteine 68. N-linked (GlcNAc...) asparagine glycosylation is present at asparagine 32. N-linked (GlcNAc...) asparagine glycosylation occurs at asparagine 75. 11 disulfide bridges follow: cysteine 94–cysteine 99, cysteine 119–cysteine 146, cysteine 122–cysteine 129, cysteine 139–cysteine 168, cysteine 174–cysteine 191, cysteine 192–cysteine 197, cysteine 215–cysteine 243, cysteine 218–cysteine 226, cysteine 236–cysteine 262, cysteine 268–cysteine 287, and cysteine 288–cysteine 293. Residues asparagine 183, asparagine 193, asparagine 221, asparagine 254, and asparagine 282 are each glycosylated (N-linked (GlcNAc...) asparagine). The GPI-anchor amidated glycine moiety is linked to residue glycine 298. The propeptide at 299-327 is removed in mature form; that stretch reads GAPRPGPAQLSLIASLLLTLGLWGVLLWT.

Monomer. Interacts (via the UPAR/Ly6 domains) with SRPX2. Interacts with MRC2. Interacts with SORL1 (via N-terminal ectodomain); this interaction decreases PLAUR internalization. The ternary complex composed of PLAUR-PLAU-SERPINE1 also interacts with SORL1. Interacts with CD82; this interaction prevents PLAUR from binding to its high affinity ligand PLAU. Expressed in angiogenic endothelial cells (at protein level).

The protein resides in the cell membrane. Its subcellular location is the secreted. Acts as a receptor for urokinase plasminogen activator. Plays a role in localizing and promoting plasmin formation. Mediates the proteolysis-independent signal transduction activation effects of U-PA. This Mus musculus (Mouse) protein is Urokinase plasminogen activator surface receptor (Plaur).